A 431-amino-acid polypeptide reads, in one-letter code: Ornithine decarboxylase (431 aa).

Lysine 94 carries the post-translational modification N6-(pyridoxal phosphate)lysine. Pyridoxal 5'-phosphate-binding positions include serine 226, glycine 264, and 297–300 (EPGR). Position 340–341 (340–341 (YD)) interacts with substrate. Cysteine 376 serves as the catalytic Proton donor; shared with dimeric partner. A substrate-binding site is contributed by aspartate 377. A pyridoxal 5'-phosphate-binding site is contributed by tyrosine 405.

Belongs to the Orn/Lys/Arg decarboxylase class-II family. Homodimer. Only the dimer is catalytically active, as the active sites are constructed of residues from both monomers. It depends on pyridoxal 5'-phosphate as a cofactor.

It carries out the reaction L-ornithine + H(+) = putrescine + CO2. It participates in amine and polyamine biosynthesis; putrescine biosynthesis via L-ornithine pathway; putrescine from L-ornithine: step 1/1. With respect to regulation, inhibited by antizyme (AZ) in response to polyamine levels. AZ inhibits the assembly of the functional homodimer by binding to ODC monomers and targeting them for ubiquitin-independent proteolytic destruction by the 26S proteasome. Catalyzes the first and rate-limiting step of polyamine biosynthesis that converts ornithine into putrescine, which is the precursor for the polyamines, spermidine and spermine. Polyamines are essential for cell proliferation and are implicated in cellular processes, ranging from DNA replication to apoptosis. The sequence is that of Ornithine decarboxylase from Datura stramonium (Jimsonweed).